Reading from the N-terminus, the 210-residue chain is MGFLKGTAAALTLLSAAAAASACGVLYEQCGGIGFDGVTCCSEGLMCMKMGPYYSQCRAMPGMMGQVKPYGQCGGMNYSGKTMCSPGFKCVELNEFFSQCDLANKSPVATPKVSPTSPPGPAQVCGKEYAACGGEMFMGAKCCKFGLVCYETSGKWQSQCRAPPPKMGEVGRYAQCGGMGYMGSTMCVGGYKCMAISEGSMYKQCLPMHP.

The signal sequence occupies residues 1–22 (MGFLKGTAAALTLLSAAAAASA). 4 consecutive CBM1 domains span residues 23 to 62 (CGVL…AMPG), 63 to 105 (MMGQ…LANK), 125 to 165 (CGKE…APPP), and 166 to 210 (KMGE…PMHP).

This Porphyra purpurea (Red seaweed) protein is Putative polysaccharide-binding protein.